The primary structure comprises 819 residues: Advillin (819 aa).

A core region spans residues 1-731 (MSLSSAFRTV…YEQLKNELGD (731 aa)). A Gelsolin-like 1 repeat occupies 24 to 105 (MELVLVPLSA…VQYHESDTFR (82 aa)). Tyr85 is subject to Phosphotyrosine. A 1,2-diacyl-sn-glycero-3-phospho-(1D-myo-inositol-4,5-bisphosphate) contacts are provided by residues 109-116 (KRGIIYKK) and 135-143 (RLLHVKGKR). Gelsolin-like repeat units follow at residues 144–215 (NIRA…KEAA), 265–339 (TEVA…SAMF), 407–486 (LVPV…RHFM), 524–592 (NTKA…PEFW), and 631–704 (TEVT…PPTF). Positions 628–819 (FLVTEVTDFT…LQLKKEAGLF (192 aa)) are required for interaction with F-actin. Positions 731-819 (DATAIVRITT…LQLKKEAGLF (89 aa)) are headpiece. Positions 753-819 (ESGPKYYPVE…LQLKKEAGLF (67 aa)) constitute an HP domain. Tyr758 is modified (phosphotyrosine).

It belongs to the villin/gelsolin family. Associates (via C-terminus) with actin. Interacts with F-actin. Interacts with SCARF1; the interaction occurs in embryonic dorsal root ganglions at 18 dpc and induces neurite-like outgrowth. Interacts with PLCE1. Interacts with ACTR2 and ACTR3; associates with the ARP2/3 complex. Expressed in dorsal root ganglion (DRG) neurons and superior cervical ganglia (SCG). Expressed in podocytes.

It localises to the cytoplasm. The protein localises to the cytoskeleton. Its subcellular location is the cell projection. The protein resides in the neuron projection. It is found in the axon. It localises to the lamellipodium. The protein localises to the cell junction. Its subcellular location is the focal adhesion. Functionally, ca(2+)-regulated actin-binding protein which plays an important role in actin bundling. May have a unique function in the morphogenesis of neuronal cells which form ganglia. Required for SREC1-mediated regulation of neurite-like outgrowth. Plays a role in regenerative sensory axon outgrowth and remodeling processes after peripheral injury in neonates. Involved in the formation of long fine actin-containing filopodia-like structures in fibroblast. Plays a role in ciliogenesis. In podocytes, controls lamellipodia formation through the regulation of EGF-induced diacylglycerol generation by PLCE1 and ARP2/3 complex assembly. The sequence is that of Advillin from Rattus norvegicus (Rat).